The following is a 363-amino-acid chain: RNA polymerase II holoenzyme cyclin-like subunit (363 aa).

In terms of domain architecture, Cyclin N-terminal spans 53–143; the sequence is YQMLRLAKNL…IGECEFWLIS (91 aa). A disordered region spans residues 252 to 312; that stretch reads TPGGSGSPAM…SPQKEKSKLQ (61 aa). A compositionally biased stretch (polar residues) spans 265-276; sequence IQQNPPNQAYQL. Positions 277-298 are enriched in low complexity; it reads TPQQQEMFRQQQMQQQNRQPET. Positions 299-310 are enriched in basic and acidic residues; it reads QAKDSPQKEKSK.

The protein belongs to the cyclin family. Cyclin C subfamily. Component of the SRB8-11 complex, a regulatory module of the Mediator complex.

The protein resides in the nucleus. Functionally, component of the SRB8-11 complex. The SRB8-11 complex is a regulatory module of the Mediator complex which is itself involved in regulation of basal and activated RNA polymerase II-dependent transcription. The SRB8-11 complex may be involved in the transcriptional repression of a subset of genes regulated by Mediator. It may inhibit the association of the Mediator complex with RNA polymerase II to form the holoenzyme complex. The SRB8-11 complex phosphorylates the C-terminal domain (CTD) of the largest subunit of RNA polymerase II. The polypeptide is RNA polymerase II holoenzyme cyclin-like subunit (SSN8) (Pyricularia oryzae (strain 70-15 / ATCC MYA-4617 / FGSC 8958) (Rice blast fungus)).